The chain runs to 316 residues: Pre-rRNA-processing protein ESF2 (316 aa).

A disordered region spans residues methionine 1 to aspartate 91. Phosphoserine is present on residues serine 7, serine 13, and serine 14. Over residues aspartate 8–threonine 18 the composition is skewed to acidic residues. Positions serine 32–aspartate 44 are enriched in basic and acidic residues. The span at isoleucine 45 to lysine 58 shows a compositional bias: acidic residues. A compositionally biased stretch (basic and acidic residues) spans glutamine 59–arginine 78. The RRM domain maps to glycine 114–isoleucine 204. A disordered region spans residues lysine 261–leucine 316. The span at glycine 268–threonine 289 shows a compositional bias: basic and acidic residues. Polar residues predominate over residues serine 290–leucine 316.

Belongs to the ESF2/ABP1 family. Component of the 90S pre-ribosomes. Interacts directly with DBP8.

It localises to the nucleus. The protein resides in the nucleolus. Involved in the small subunit (SSU) processome assembly and function, and in the 18S rRNA synthesis. Required for the early cleavages at sites A0, A1 and A2. Stimulates DBP8 RNA helicase ATPase activity. This chain is Pre-rRNA-processing protein ESF2 (ESF2), found in Saccharomyces cerevisiae (strain ATCC 204508 / S288c) (Baker's yeast).